The sequence spans 224 residues: EF-hand calcium-binding domain-containing protein 1 (224 aa).

The signal sequence occupies residues 1 to 21 (MKVSLLLLALVLVCLVQGSES). An EF-hand domain is found at 115–150 (IAHPDFMKAYSIADVDGDGELSPKEFYNGPYVFEMD). The Ca(2+) site is built by Asp-128, Asp-130, Asp-132, Glu-134, and Glu-139.

As to expression, component of the acid-soluble organic matrix of calcified layers of the shell (at protein level).

Its subcellular location is the secreted. This Lottia gigantea (Giant owl limpet) protein is EF-hand calcium-binding domain-containing protein 1.